Reading from the N-terminus, the 511-residue chain is MAAAKTEMLLPALQISDPLSFPHSPTDNYPKLEEMIMLNSAGTPFLNATAPEGAVFGSGEPGEQFDHLAGDTLSEISMEKPLSDQTYSTQRLPPISYTGRFTLEPATNCSNSLWAEPLFSLVSGLVGINPPPASIPSSTSQATHPSSSSTSSIPSSSSSSTSSASLSCSVHQSEPNPIYSAAPTYSSASPDIFPESGPNFSTTVGTSLQYSSSTYPSAKTCNPSFSVPMIPDYLFTQQQSEISLVPPDQKPIQTQAGQQPALTPLHTIKAFATQTGSQDLKSVYQSQLIKPSRMRKYPNRPSKTPPHERPYACPVETCDRRFSRSDELTRHIRIHTGQKPFQCRICMRNFSRSDHLTTHIRTHTGEKPFACEICGRKFARSDERKRHTKIHMRQKDKKAEKGATAAVQSSVSNISISASSPVSSYPSPITSYPSPVSSFPSPVNSCYSSPVHTSYPSPSIATTYPSATSTFQTQVATSFPTSVASNIYSSPVTTPLPDMQSALSPRTADIC.

Disordered regions lie at residues 133–169 (ASIP…LSCS) and 291–312 (PSRM…RPYA). Positions 137-169 (SSTSQATHPSSSSTSSIPSSSSSSTSSASLSCS) are enriched in low complexity. 3 consecutive C2H2-type zinc fingers follow at residues 311-335 (YACP…IRIH), 341-363 (FQCR…IRTH), and 369-391 (FACE…TKIH). The segment at 384–406 (RKRHTKIHMRQKDKKAEKGATAA) is disordered. The segment covering 386 to 396 (RHTKIHMRQKD) has biased composition (basic residues).

Belongs to the EGR C2H2-type zinc-finger protein family. Detected in muscle and brain.

It is found in the nucleus. The protein resides in the cytoplasm. In terms of biological role, transcriptional regulator. Recognizes and binds to the DNA sequence 5'-GCG(T/G)GGGCG-3'(EGR-site) in the promoter region of target genes. Binds double-stranded target DNA, irrespective of the cytosine methylation status. Regulates the transcription of numerous target genes, and thereby plays an important role in regulating the response to growth factors, DNA damage, and ischemia. Plays a role in the regulation of cell survival, proliferation and cell death. Mediates responses to ischemia and hypoxia; regulates the expression of proteins that are involved in inflammatory processes. Plays a role in regulating the expression of circadian clock genes. Plays a role in the organization of Muller glia cells in the inner and outer plexiform layers of the retina. This is Early growth response protein 1 (egr1) from Danio rerio (Zebrafish).